Reading from the N-terminus, the 702-residue chain is Ribosomal RNA large subunit methyltransferase K/L (702 aa).

The THUMP domain maps to 43–154 (LIYQSLMWSR…KETASIALDL (112 aa)).

Belongs to the methyltransferase superfamily. RlmKL family.

It is found in the cytoplasm. The enzyme catalyses guanosine(2445) in 23S rRNA + S-adenosyl-L-methionine = N(2)-methylguanosine(2445) in 23S rRNA + S-adenosyl-L-homocysteine + H(+). It carries out the reaction guanosine(2069) in 23S rRNA + S-adenosyl-L-methionine = N(2)-methylguanosine(2069) in 23S rRNA + S-adenosyl-L-homocysteine + H(+). In terms of biological role, specifically methylates the guanine in position 2445 (m2G2445) and the guanine in position 2069 (m7G2069) of 23S rRNA. The sequence is that of Ribosomal RNA large subunit methyltransferase K/L from Salmonella schwarzengrund (strain CVM19633).